Here is a 393-residue protein sequence, read N- to C-terminus: NAD(P)H-quinone oxidoreductase subunit H 1 (393 aa).

Belongs to the complex I 49 kDa subunit family. In terms of assembly, NDH-1 can be composed of about 15 different subunits; different subcomplexes with different compositions have been identified which probably have different functions.

The protein localises to the cell inner membrane. It catalyses the reaction a plastoquinone + NADH + (n+1) H(+)(in) = a plastoquinol + NAD(+) + n H(+)(out). It carries out the reaction a plastoquinone + NADPH + (n+1) H(+)(in) = a plastoquinol + NADP(+) + n H(+)(out). In terms of biological role, NDH-1 shuttles electrons from an unknown electron donor, via FMN and iron-sulfur (Fe-S) centers, to quinones in the respiratory and/or the photosynthetic chain. The immediate electron acceptor for the enzyme in this species is believed to be plastoquinone. Couples the redox reaction to proton translocation, and thus conserves the redox energy in a proton gradient. Cyanobacterial NDH-1 also plays a role in inorganic carbon-concentration. This chain is NAD(P)H-quinone oxidoreductase subunit H 1, found in Gloeobacter violaceus (strain ATCC 29082 / PCC 7421).